The sequence spans 91 residues: ATP synthase subunit c (91 aa).

Helical transmembrane passes span 4–24 and 53–73; these read FTMC…GTGI and IGLA…LIIL.

Belongs to the ATPase C chain family. F-type ATPases have 2 components, F(1) - the catalytic core - and F(0) - the membrane proton channel. F(1) has five subunits: alpha(3), beta(3), gamma(1), delta(1), epsilon(1). F(0) has three main subunits: a(1), b(2) and c(10-14). The alpha and beta chains form an alternating ring which encloses part of the gamma chain. F(1) is attached to F(0) by a central stalk formed by the gamma and epsilon chains, while a peripheral stalk is formed by the delta and b chains.

It is found in the cell inner membrane. In terms of biological role, f(1)F(0) ATP synthase produces ATP from ADP in the presence of a proton or sodium gradient. F-type ATPases consist of two structural domains, F(1) containing the extramembraneous catalytic core and F(0) containing the membrane proton channel, linked together by a central stalk and a peripheral stalk. During catalysis, ATP synthesis in the catalytic domain of F(1) is coupled via a rotary mechanism of the central stalk subunits to proton translocation. Functionally, key component of the F(0) channel; it plays a direct role in translocation across the membrane. A homomeric c-ring of between 10-14 subunits forms the central stalk rotor element with the F(1) delta and epsilon subunits. The protein is ATP synthase subunit c of Geotalea uraniireducens (strain Rf4) (Geobacter uraniireducens).